The chain runs to 171 residues: 3-hydroxydecanoyl-[acyl-carrier-protein] dehydratase (171 aa).

His-70 is a catalytic residue.

Belongs to the thioester dehydratase family. FabA subfamily. Homodimer.

The protein localises to the cytoplasm. The catalysed reaction is a (3R)-hydroxyacyl-[ACP] = a (2E)-enoyl-[ACP] + H2O. It catalyses the reaction (3R)-hydroxydecanoyl-[ACP] = (2E)-decenoyl-[ACP] + H2O. It carries out the reaction (2E)-decenoyl-[ACP] = (3Z)-decenoyl-[ACP]. The protein operates within lipid metabolism; fatty acid biosynthesis. In terms of biological role, necessary for the introduction of cis unsaturation into fatty acids. Catalyzes the dehydration of (3R)-3-hydroxydecanoyl-ACP to E-(2)-decenoyl-ACP and then its isomerization to Z-(3)-decenoyl-ACP. Can catalyze the dehydratase reaction for beta-hydroxyacyl-ACPs with saturated chain lengths up to 16:0, being most active on intermediate chain length. The protein is 3-hydroxydecanoyl-[acyl-carrier-protein] dehydratase of Ectopseudomonas mendocina (strain ymp) (Pseudomonas mendocina).